Consider the following 842-residue polypeptide: uncharacterized protein (842 aa).

2 disordered regions span residues methionine 1–glutamate 20 and asparagine 142–serine 209. The 388-residue stretch at threonine 35–leucine 422 folds into the uDENN FNIP1/2-type domain. Over residues alanine 183 to serine 209 the composition is skewed to polar residues. In terms of domain architecture, cDENN FNIP1/2-type spans alanine 430–glutamate 772. 2 positions are modified to phosphoserine: serine 573 and serine 590. The dDENN FNIP1/2-type domain maps to tyrosine 777–cysteine 842.

It localises to the cytoplasm. This is an uncharacterized protein from Schizosaccharomyces pombe (strain 972 / ATCC 24843) (Fission yeast).